A 768-amino-acid chain; its full sequence is Phosphoribosylformylglycinamidine synthase subunit PurL (768 aa).

Residue His48 is part of the active site. Residues Tyr51 and Lys90 each contribute to the ATP site. Glu92 contributes to the Mg(2+) binding site. Residues 93–96 (SHNH) and Arg115 contribute to the substrate site. The active-site Proton acceptor is the His94. Asp116 is a Mg(2+) binding site. Gln239 is a binding site for substrate. Asp267 provides a ligand contact to Mg(2+). A substrate-binding site is contributed by 311–313 (ESQ). 2 residues coordinate ATP: Asp507 and Gly544. Asn545 is a binding site for Mg(2+). Substrate is bound at residue Ser547.

Belongs to the FGAMS family. Monomer. Part of the FGAM synthase complex composed of 1 PurL, 1 PurQ and 2 PurS subunits.

The protein localises to the cytoplasm. The enzyme catalyses N(2)-formyl-N(1)-(5-phospho-beta-D-ribosyl)glycinamide + L-glutamine + ATP + H2O = 2-formamido-N(1)-(5-O-phospho-beta-D-ribosyl)acetamidine + L-glutamate + ADP + phosphate + H(+). It participates in purine metabolism; IMP biosynthesis via de novo pathway; 5-amino-1-(5-phospho-D-ribosyl)imidazole from N(2)-formyl-N(1)-(5-phospho-D-ribosyl)glycinamide: step 1/2. Part of the phosphoribosylformylglycinamidine synthase complex involved in the purines biosynthetic pathway. Catalyzes the ATP-dependent conversion of formylglycinamide ribonucleotide (FGAR) and glutamine to yield formylglycinamidine ribonucleotide (FGAM) and glutamate. The FGAM synthase complex is composed of three subunits. PurQ produces an ammonia molecule by converting glutamine to glutamate. PurL transfers the ammonia molecule to FGAR to form FGAM in an ATP-dependent manner. PurS interacts with PurQ and PurL and is thought to assist in the transfer of the ammonia molecule from PurQ to PurL. The polypeptide is Phosphoribosylformylglycinamidine synthase subunit PurL (Parasynechococcus marenigrum (strain WH8102)).